Here is a 490-residue protein sequence, read N- to C-terminus: 5'-3' exonuclease PLD3 (490 aa).

At M1–W38 the chain is on the cytoplasmic side. A helical; Signal-anchor for type II membrane protein transmembrane segment spans residues V39–L59. Topologically, residues W60–L490 are lumenal. Cystine bridges form between C77–C239 and C81–C237. 2 N-linked (GlcNAc...) asparagine glycosylation sites follow: N97 and N132. The PLD phosphodiesterase 1 domain occupies T196–S223. Active-site residues include H201, K203, and D208. The Proton donor role is filled by H201. H201 and K203 together coordinate phosphate. Residue N218 coordinates phosphate. N-linked (GlcNAc...) asparagine glycans are attached at residues N236, N284, and N387. A disulfide bridge connects residues C366 and C487. The PLD phosphodiesterase 2 domain occupies Y411–Y437. H416 contributes to the phosphate binding site. The active-site Nucleophile is the H416. Position 438 (F438) interacts with Mg(2+).

This sequence belongs to the phospholipase D family. As to quaternary structure, homodimer. Interacts with APP. N-glycosylated. In terms of processing, proteolytically processed to a soluble form that is stable within endosomes and lysosomes. During transport through the secretory pathway becomes proteolysed by cysteine proteases, thereby releasing a stable soluble lysosomal lumenal polypeptide, whereas the transmembrane-bound fragment is rapidly degraded. Its transport route to lysosomes involves ubiquitination and the ESCRT complex. Post-translationally, ubiquitinated. Ubiquitination mediates sorting into lysosomes.

The protein resides in the endoplasmic reticulum membrane. It is found in the lysosome lumen. The protein localises to the early endosome membrane. Its subcellular location is the late endosome membrane. It localises to the golgi apparatus membrane. The protein resides in the endosome membrane. It catalyses the reaction Exonucleolytic cleavage in the 5'- to 3'-direction to yield nucleoside 3'-phosphates.. The catalysed reaction is a 5'-end 5'-dephospho-ribonucleotidyl-ribonucleotide-RNA + H2O = a ribonucleoside 3'-phosphate + a 5'-end dephospho-ribonucleoside-RNA + H(+). The enzyme catalyses a ribonucleoside 3'-phosphate-2'-3'-cyclophospho-GMP + H2O = a ribonucleoside 3'-phosphate + 2',3'-cyclophospho-GMP + H(+). It carries out the reaction a 5'-end 5'-dephospho-2'-deoxyribonucleotidyl-2'-deoxyribonucleotide in single-stranded DNA + H2O = a 5'-end dephospho-2'-deoxyribonucleoside in single-stranded DNA + a 2'-deoxyribonucleoside 3'-phosphate + H(+). It catalyses the reaction a 5'-end 5'-phospho-2'-deoxyribonucleotide in single-stranded DNA + H2O = a 5'-end 5'-dephospho-2'-deoxyribonucleotide in single-stranded DNA + phosphate. The catalysed reaction is a 3-lyso-sn-glycero-1-phospho-(3'-acyl-1'-sn-glycerol) + a 1-acyl-sn-glycerol = a 3-acyl-sn-glycero-1-phospho-(3'-acyl-1'-sn-glycerol) + glycerol. The enzyme catalyses 3-lyso-sn-glycero-1-phospho-(3'-(9Z-octadecenoyl)-1'-sn-glycerol) + 1-(9Z-octadecenoyl)-sn-glycerol = 3-(9Z-octadecenoyl)-sn-glycero-1-phospho-(3'-(9Z-octadecenoyl)-1'-sn-glycerol) + glycerol. Functionally, 5'-&gt;3' exonuclease that hydrolyzes the phosphodiester bond of single-stranded DNA (ssDNA) and RNA molecules to form nucleoside 3'-monophosphates and 5'-end 5'-hydroxy deoxyribonucleotide/ribonucleotide fragments. Partially redundant with PLD4, can cleave all four nucleotides displaying higher efficiency for ssDNA and RNA fragments initiated with uridine and guanosine residues and lower efficiency for cytidine-initiated substrates. As a result, it does not always degrade polynucleotides to the single nucleotide level, it can stall at specific sites sparing certain fragments from exonucleolytic degradation. Processes self and pathogenic ssDNA and RNA molecules that reach the endolysosomal compartment via phagocytosis or autophagy and may serve as 'danger' signals for recognition by innate immune receptors such as toll-like receptors (TLRs). Degrades mitochondrial CpG-rich ssDNA fragments to prevent TLR9 activation and autoinflammatory response, but it can cleave viral RNA to generate ligands for TLR7 activation and initiate antiviral immune responses. In plasmacytoid dendritic cells, it cooperates with endonuclease RNASET2 to release 2',3'-cyclic guanosine monophosphate (2',3'-cGMP), a potent stimulatory ligand for TLR7. Produces 2',3'-cGMPs and cytidine-rich RNA fragments that occupy TLR7 ligand-binding pockets and trigger a signaling-competent state. Can exert polynucleotide phosphatase activity toward 5'-phosphorylated ssDNA substrates although at a slow rate. Transphosphatidylase that catalyzes the exchange with R to S stereo-inversion of the glycerol moiety between (S,R)-lysophosphatidylglycerol (LPG) and monoacylglycerol (MAG) substrates to yield (S,S)-bis(monoacylglycero)phosphate (BMP). Can synthesize a variety of (S,S)-BMPs representing the main phospholipid constituent of lysosomal intralumenal vesicle (ILV) membranes that bind acid hydrolases for lipid degradation. Regulates the homeostasis and interorganellar communication of the endolysosomal system with an overall impact on cellular removal of dysfunctional organelles via autophagy as well as proper protein and lipid turnover. May play a role in myotube formation in response to ER stress. The protein is 5'-3' exonuclease PLD3 (PLD3) of Pongo abelii (Sumatran orangutan).